Here is a 77-residue protein sequence, read N- to C-terminus: Large ribosomal subunit protein bL28 (77 aa).

It belongs to the bacterial ribosomal protein bL28 family.

The polypeptide is Large ribosomal subunit protein bL28 (Leptothrix cholodnii (strain ATCC 51168 / LMG 8142 / SP-6) (Leptothrix discophora (strain SP-6))).